Here is a 501-residue protein sequence, read N- to C-terminus: L-ornithine N(5)-monooxygenase (501 aa).

The interval 1 to 31 (MESVERKSESSYLGMRNMQPEQRLSLDPPRL) is disordered. Residues 83 to 91 (ERQKQFAWH) and Gln102 each bind FAD. Lys107 is a binding site for substrate. Val168 contacts FAD. Residues 254-257 (SGQS) and Arg279 each bind NADP(+). Residues 293–296 (NEIF) and Asn323 contribute to the substrate site. Residue 323 to 325 (NYS) participates in NADP(+) binding. Positions 366–390 (EHHGPQSRMRIHLKSSKPESEGAAN) are disordered. Basic and acidic residues predominate over residues 381-390 (SKPESEGAAN). Position 466–468 (466–468 (SLL)) interacts with FAD. Ser469 contributes to the substrate binding site.

Belongs to the lysine N(6)-hydroxylase/L-ornithine N(5)-oxygenase family. As to quaternary structure, homotetramer. FAD is required as a cofactor.

The enzyme catalyses L-ornithine + NADPH + O2 = N(5)-hydroxy-L-ornithine + NADP(+) + H2O. It catalyses the reaction L-ornithine + NADH + O2 = N(5)-hydroxy-L-ornithine + NAD(+) + H2O. The protein operates within siderophore biosynthesis; ferrichrome biosynthesis. L-ornithine N(5)-monooxygenase; part of the siderophore biosynthetic pathway. Aspergillus fumigatus produces four types of siderophores, low-molecular-mass iron chelators, including excreted fusarinine C (FsC) and triacetylfusarinine C (TAFC) for iron uptake; and intacellular ferricrocin (FC) for hyphal and hydroxyferricrocin (HFC) for conidial iron distribution and storage. TAFC consists of three N(2)-acetyl-N(5)-anhydromevalonyl-N(5)-hydroxyornithine residues cyclically linked by ester bonds; FC is a cyclic hexapeptide with the structure Gly-Ser-Gly-(N(5)-acetyl-N(5)-hydroxyornithine)x3. The biosynthesis of all four siderophores depends on the hydroxylation of ornithine, catalyzed by the monooxygenase sidA. SidA is highly specific for its substrate, only hydrolyzing l-ornithine, and has preference for NADPH over NADH, NADPH playing a role in stabilization of the C4a-hydroperoxyflavin intermediate. Subsequently, the pathways for biosynthesis of extra- and intracellular siderophores split. For biosynthesis of extracellular siderophores, the transacylase sidF transfers anhydromevalonyl to N(5)-hydroxyornithine. The required anhydromevalonyl-CoA moiety is derived from mevalonate by CoA ligation and dehydration catalyzed by sidI and sidH respectively. The acetylation of N(5)-hydroxyornithine for FC biosynthesis involves the constitutively expressed sidL. FC is hydroxylated to HFC by an as yet uncharacterized enzyme during conidiation. Assembly of fusarinine C (FsC) and FC is catalyzed by two different nonribosomal peptide synthetases (NRPS), sidD and sidC respectively. Subsequently, sidG catalyzes N2-acetylation of FsC for forming TAFC. Both extra- and intracellular siderophores are crucial for growth during iron limitation and virulence. This Aspergillus fumigatus (strain ATCC MYA-4609 / CBS 101355 / FGSC A1100 / Af293) (Neosartorya fumigata) protein is L-ornithine N(5)-monooxygenase.